The sequence spans 489 residues: Glycogen synthase (489 aa).

Arg20 lines the ADP-alpha-D-glucose pocket.

Belongs to the glycosyltransferase 1 family. Bacterial/plant glycogen synthase subfamily.

The catalysed reaction is [(1-&gt;4)-alpha-D-glucosyl](n) + ADP-alpha-D-glucose = [(1-&gt;4)-alpha-D-glucosyl](n+1) + ADP + H(+). The protein operates within glycan biosynthesis; glycogen biosynthesis. Functionally, synthesizes alpha-1,4-glucan chains using ADP-glucose. The polypeptide is Glycogen synthase (Chlorobium chlorochromatii (strain CaD3)).